Consider the following 468-residue polypeptide: Nucleoprotein (468 aa).

The disordered stretch occupies residues 1-64; sequence MSGRNRSRSG…KPKAAPPQNV (64 aa). Over residues 18 to 33 the composition is skewed to basic and acidic residues; the sequence is FKQESDGSDSESERRN. The tract at residues 48–193 is RNA-binding; the sequence is GSAPKPEKPK…AEGRGSRGNS (146 aa). The 125-residue stretch at 62–186 folds into the CoV N NTD domain; it reads QNVSWFAPLV…GIPKGFYAEG (125 aa). RNA contacts are provided by R106, R120, and R162. S165 is subject to Phosphoserine; by host. 3 disordered regions span residues 181-228, 373-399, and 419-468; these read GFYA…PSTE, KDFP…IFED, and QTDD…AERS. Residues 190-223 are compositionally biased toward low complexity; it reads RGNSRSSSRNSSRASSRGNSRASSRGASPGRPAA. The CoV N CTD domain occupies 259-376; sequence TKNEAAANAK…ENLNAYKDFP (118 aa). The segment at 270-373 is dimerization; that stretch reads LRHKRTAHKG…ILAENLNAYK (104 aa). Over residues 379–390 the composition is skewed to basic and acidic residues; it reads EPKKDKKKKEET. Residues 419 to 436 are compositionally biased toward acidic residues; that stretch reads QTDDEWLGGDETVYEDED. The residue at position 451 (T451) is a Phosphothreonine; by host.

The protein belongs to the betacoronavirus nucleocapsid protein family. Homooligomer. Both monomeric and oligomeric forms interact with RNA. Interacts with protein M. Interacts with NSP3; this interaction serves to tether the genome to the newly translated replicase-transcriptase complex at a very early stage of infection. In terms of processing, ADP-ribosylated. The ADP-ribosylation is retained in the virion during infection. Post-translationally, phosphorylated on serine and threonine residues.

Its subcellular location is the virion. It is found in the host endoplasmic reticulum-Golgi intermediate compartment. The protein localises to the host Golgi apparatus. Functionally, packages the positive strand viral genome RNA into a helical ribonucleocapsid (RNP) and plays a fundamental role during virion assembly through its interactions with the viral genome and membrane protein M. Plays an important role in enhancing the efficiency of subgenomic viral RNA transcription as well as viral replication. The polypeptide is Nucleoprotein (Rousettus leschenaultii (Leschenault's rousette)).